The chain runs to 45 residues: Movement protein p5 (45 aa).

The helical transmembrane segment at isoleucine 8 to valine 28 threads the bilayer.

It is found in the host rough endoplasmic reticulum membrane. Its function is as follows. Transports viral genome to neighboring plant cells directly through plasmosdesmata, without any budding. The movement protein allows efficient cell to cell propagation, by bypassing the host cell wall barrier. Two movement proteins, p6, Hsp70h and three structural proteins, CP, CPm, and P64 are essential for cell-cell movement. Also plays a role in virion formation. Together with CPm and p64, encapsidates the 5'-terminal portion of the viral genome. The protein is Movement protein p5 of Grapevine leafroll-associated virus 3 (isolate United States/NY1) (GLRaV-3).